Here is a 601-residue protein sequence, read N- to C-terminus: Putative pentatricopeptide repeat-containing protein At3g25060, mitochondrial (601 aa).

The transit peptide at 1–80 directs the protein to the mitochondrion; that stretch reads MVQTKHFCML…KVFDELPQRG (80 aa). 13 PPR repeats span residues 49-79, 80-114, 115-149, 150-180, 181-215, 216-250, 251-281, 282-316, 317-347, 351-381, 382-416, 417-452, and 453-487; these read GSSI…LPQR, GVSV…KIQP, DSST…GYKN, DVFV…MAKR, DVIC…GFGR, DRVV…GLPM, NVVV…MMFK, TAVS…GFQP, DLVT…ILKR, DRVT…VGRK, DLVC…NIEP, DHAT…KIQP, and SEKH…NALP. The type E motif stretch occupies residues 488–563; it reads IWVALLSGCI…VPGYSAIEVN (76 aa). A type E(+) motif region spans residues 564–594; it reads GELRTFLMEDLSHHEHYHMLQVLRNLKTEIR.

This sequence belongs to the PPR family. PCMP-E subfamily.

It is found in the mitochondrion. The chain is Putative pentatricopeptide repeat-containing protein At3g25060, mitochondrial (PCMP-E96) from Arabidopsis thaliana (Mouse-ear cress).